Reading from the N-terminus, the 461-residue chain is Adenine DNA glycosylase (461 aa).

The active-site Proton donor/acceptor is Glu69. Residues Cys226, Cys233, Cys236, and Cys242 each contribute to the [4Fe-4S] cluster site. The region spanning 296–437 (QREERALVVI…RAALEIKKRK (142 aa)) is the Nudix hydrolase domain. A Nudix box motif is present at residues 340–366 (FGQESWPKDMDAEFQKSIAQWISNDSR).

Belongs to the Nth/MutY family. As to quaternary structure, monomer. The cofactor is [4Fe-4S] cluster.

It carries out the reaction Hydrolyzes free adenine bases from 7,8-dihydro-8-oxoguanine:adenine mismatched double-stranded DNA, leaving an apurinic site.. Functionally, adenine glycosylase active on G-A mispairs. Has glycosylase and nicking activities and is active at A/G and A/GO sites. The protein is Adenine DNA glycosylase (myh1) of Schizosaccharomyces pombe (strain 972 / ATCC 24843) (Fission yeast).